Consider the following 99-residue polypeptide: Large ribosomal subunit protein eL21 (99 aa).

Belongs to the eukaryotic ribosomal protein eL21 family.

The chain is Large ribosomal subunit protein eL21 from Ignicoccus hospitalis (strain KIN4/I / DSM 18386 / JCM 14125).